The sequence spans 584 residues: Isopropyl malate synthase htyA (584 aa).

The Pyruvate carboxyltransferase domain occupies 39 to 317 (PIWLSTDLRD…ETGLDFSNLP (279 aa)).

This sequence belongs to the alpha-IPM synthase/homocitrate synthase family. LeuA type 2 subfamily.

The catalysed reaction is 3-methyl-2-oxobutanoate + acetyl-CoA + H2O = (2S)-2-isopropylmalate + CoA + H(+). Its pathway is antifungal biosynthesis. In terms of biological role, isopropyl malate synthase; part of the gene cluster that mediates the de novo generation of L-homotyrosine from acetyl-CoA and 4-hydroxyphenyl-pyruvate. L-homotyrosine is a building block of echinocandin B, a fungal lipidated cyclic hexapeptide that acts as an antifungal agent. L-homotyrosine 4-hydroxyphenyl-pyruvate first undergoes an aldol-type condensation by htyA with the C-2 of acetyl-CoA followed by the release of CoA to form 2-(4-hydroxybenzyl)-malate. This is followed by isomerization of 2-(4-hydroxy-benzyl)-malate to 3-(4-hydroxybenzyl)-malate by htyD. Thereafter, 3-(4-hydroxybenzyl)-malate undergoes decarboxylation and oxidation to form 2-oxo-4-(4-hydroxybenzyl)butanoic acid, coupled to reduction of NAD(+) to NADH by htyC. The product then undergoes transamination catalyzed by htyB to form L-homotyrosine. The sequence is that of Isopropyl malate synthase htyA from Aspergillus rugulosus (Emericella rugulosa).